The sequence spans 281 residues: Putative pyruvate, phosphate dikinase regulatory protein (281 aa).

Residue 150–157 participates in ADP binding; it reads GVSRTSKT.

It belongs to the pyruvate, phosphate/water dikinase regulatory protein family. PDRP subfamily.

It carries out the reaction N(tele)-phospho-L-histidyl/L-threonyl-[pyruvate, phosphate dikinase] + ADP = N(tele)-phospho-L-histidyl/O-phospho-L-threonyl-[pyruvate, phosphate dikinase] + AMP + H(+). The catalysed reaction is N(tele)-phospho-L-histidyl/O-phospho-L-threonyl-[pyruvate, phosphate dikinase] + phosphate + H(+) = N(tele)-phospho-L-histidyl/L-threonyl-[pyruvate, phosphate dikinase] + diphosphate. Functionally, bifunctional serine/threonine kinase and phosphorylase involved in the regulation of the pyruvate, phosphate dikinase (PPDK) by catalyzing its phosphorylation/dephosphorylation. This chain is Putative pyruvate, phosphate dikinase regulatory protein, found in Sorangium cellulosum (strain So ce56) (Polyangium cellulosum (strain So ce56)).